The sequence spans 318 residues: Protein W (318 aa).

2 disordered regions span residues 1-24 and 38-318; these read MDQD…GRES and SEPT…KKGA. The segment covering 7 to 20 has biased composition (basic and acidic residues); sequence ISKEDSEVEREASG. A compositionally biased stretch (polar residues) spans 50-61; that stretch reads LHNTINTLQRPG. 2 stretches are compositionally biased toward basic and acidic residues: residues 99 to 110 and 150 to 168; these read AEAHARNVDKQN and GAED…RGED. Phosphoserine; by host occurs at positions 249, 257, and 260.

In Sendai virus (strain Hamamatsu) (SeV), this protein is Protein W (P/V/C).